A 425-amino-acid polypeptide reads, in one-letter code: Inner membrane protein YqcE (425 aa).

Topologically, residues Met1 to Arg8 are cytoplasmic. A helical membrane pass occupies residues Trp9–Arg29. Over Tyr30–Gly48 the chain is Periplasmic. Residues Leu49 to Ala69 form a helical membrane-spanning segment. The Cytoplasmic segment spans residues Asp70 to Arg75. 2 consecutive transmembrane segments (helical) span residues Lys76–Pro96 and Pro97–Trp117. Residues Ser118–Gly138 lie on the Cytoplasmic side of the membrane. A helical transmembrane segment spans residues Trp139 to Phe159. At Ser160 to Lys171 the chain is on the periplasmic side. A helical transmembrane segment spans residues Thr172–Val192. The Cytoplasmic portion of the chain corresponds to Ser193–Arg219. Residues Ile220–Leu240 form a helical membrane-spanning segment. The Periplasmic portion of the chain corresponds to Ser241–Ser259. The chain crosses the membrane as a helical span at residues Tyr260–Ile280. The Cytoplasmic portion of the chain corresponds to Thr281–Arg291. A helical transmembrane segment spans residues Val292 to Ser312. A topological domain (periplasmic) is located at residue Asn313. Residues Pro314 to Ser334 form a helical membrane-spanning segment. Residues Arg335–Thr354 are Cytoplasmic-facing. The helical transmembrane segment at Thr355–Gly375 threads the bilayer. The Periplasmic segment spans residues His376–Arg388. A helical transmembrane segment spans residues Asn389–Phe409. Topologically, residues Gln410–Lys425 are cytoplasmic.

This sequence to E.coli YihN.

The protein localises to the cell inner membrane. The protein is Inner membrane protein YqcE (yqcE) of Escherichia coli (strain K12).